We begin with the raw amino-acid sequence, 184 residues long: NADH-dependent flavin reductase subunit 2 (184 aa).

Belongs to the NADH-dependent flavin reductase family. As to quaternary structure, requires LJ_0548 for activity, but the exact composition of the enzyme is unclear.

The catalysed reaction is a reduced flavin + NAD(+) = an oxidized flavin + NADH + 2 H(+). Functionally, component of an enzyme that catalyzes the reduction of free flavins (FMN, FAD and riboflavin) by NADH; the reduced flavins produced by this reaction likely spontaneously react with oxygen, yielding hydrogen peroxide. Is responsible for the major H(2)O(2) production in L.johnsonii in the presence of oxygen. Cannot use NADPH instead of NADH as the electron donor. This chain is NADH-dependent flavin reductase subunit 2 (nfr2), found in Lactobacillus johnsonii (strain CNCM I-12250 / La1 / NCC 533).